A 491-amino-acid polypeptide reads, in one-letter code: Mitochondrial MYO2 receptor-related protein 1 (491 aa).

Thr12 bears the Phosphothreonine mark. A phosphoserine mark is found at Ser16 and Ser37. Residues Asn295–Glu384 are a coiled coil. The segment at Asn300 to Thr439 is interaction with MYO2. The interval Lys419 to Lys491 is disordered. Residues Ser461 to Gly472 show a composition bias toward polar residues.

In terms of assembly, interacts with MYO2 and PCL7. Post-translationally, phosphorylated by the cyclin-CDK PCL7-PHO85.

It is found in the bud tip. It localises to the bud neck. The protein resides in the mitochondrion outer membrane. Functionally, involved in the guiding of mitochondrial tubules to the bud tip during cell division. This chain is Mitochondrial MYO2 receptor-related protein 1 (MMR1), found in Saccharomyces cerevisiae (strain ATCC 204508 / S288c) (Baker's yeast).